The primary structure comprises 189 residues: Elongation factor P (189 aa).

This sequence belongs to the elongation factor P family.

The protein localises to the cytoplasm. It participates in protein biosynthesis; polypeptide chain elongation. Involved in peptide bond synthesis. Stimulates efficient translation and peptide-bond synthesis on native or reconstituted 70S ribosomes in vitro. Probably functions indirectly by altering the affinity of the ribosome for aminoacyl-tRNA, thus increasing their reactivity as acceptors for peptidyl transferase. This chain is Elongation factor P, found in Sinorhizobium fredii (strain NBRC 101917 / NGR234).